A 345-amino-acid polypeptide reads, in one-letter code: Phosphoribosylformylglycinamidine cyclo-ligase (345 aa).

The protein belongs to the AIR synthase family.

It is found in the cytoplasm. It catalyses the reaction 2-formamido-N(1)-(5-O-phospho-beta-D-ribosyl)acetamidine + ATP = 5-amino-1-(5-phospho-beta-D-ribosyl)imidazole + ADP + phosphate + H(+). It participates in purine metabolism; IMP biosynthesis via de novo pathway; 5-amino-1-(5-phospho-D-ribosyl)imidazole from N(2)-formyl-N(1)-(5-phospho-D-ribosyl)glycinamide: step 2/2. This Bifidobacterium longum (strain DJO10A) protein is Phosphoribosylformylglycinamidine cyclo-ligase.